Consider the following 539-residue polypeptide: MAAAVRVTAARARLRVVVRSLHAGVRSLCTQPVSVNERIENKRQAALLGGGQRRIDSQHKRGKLTARERISLLLDPGSFIESDMFVEHRCADFGMAADKNKFPGDSVVTGRGRINGRLVYVFSQDFTVFGGSLSGAHAQKICKIMDQAMTVGAPVIGLNDSGGARIQEGVESLAGYADIFLRNVSASGVIPQISLIMGPCAGGAVYSPALTDFTFMVKDTSYLFITGPDVVKSVTNEDVTQEELGGARTHTTMSGVAHRAFDNDVDALCNLREFFNYLPLSNQDPAPIRECHDPSDRLVPELDTVVPLESTRAYDMVDIIYSIVDERDFFEIMPNYAKNIIVGFARMNGRTVGIVGNQPKVASGCLDINSSVKGARFVRFCDAFNIPLITFVDVPGFLPGTAQEYGGIIRHGAKLLYAFAEATVPKITVITRKAYGGAYDVMSSKHLCGDTNYAWPTAEIAVMGAKGAVEIIFKGHENVEAAQAEYIEKFANPFPAAVRGFVDDIIQPSSTRARICCDLDVLASKKVQRPWRKHANIPL.

A mitochondrion-targeting transit peptide spans 1 to 28 (MAAAVRVTAARARLRVVVRSLHAGVRSL). In terms of domain architecture, CoA carboxyltransferase N-terminal spans 32-290 (PVSVNERIEN…SNQDPAPIRE (259 aa)). Residues 32–533 (PVSVNERIEN…SKKVQRPWRK (502 aa)) are carboxyltransferase. Serine 71 is subject to Phosphoserine. The residue at position 99 (lysine 99) is an N6-acetyllysine; alternate. Residue lysine 99 is modified to N6-succinyllysine; alternate. A CoA carboxyltransferase C-terminal domain is found at 294-533 (PSDRLVPELD…SKKVQRPWRK (240 aa)). The tract at residues 325-358 (DERDFFEIMPNYAKNIIVGFARMNGRTVGIVGNQ) is acyl-CoA binding. An N6-acetyllysine; alternate mark is found at lysine 474 and lysine 489. Residues lysine 474 and lysine 489 each carry the N6-succinyllysine; alternate modification.

It belongs to the AccD/PCCB family. The holoenzyme is a dodecamer composed of 6 PCCA/alpha subunits and 6 PCCB/beta subunits.

The protein resides in the mitochondrion matrix. It carries out the reaction propanoyl-CoA + hydrogencarbonate + ATP = (S)-methylmalonyl-CoA + ADP + phosphate + H(+). It catalyses the reaction butanoyl-CoA + hydrogencarbonate + ATP = (2S)-ethylmalonyl-CoA + ADP + phosphate + H(+). The protein operates within metabolic intermediate metabolism; propanoyl-CoA degradation; succinyl-CoA from propanoyl-CoA: step 1/3. Functionally, this is one of the 2 subunits of the biotin-dependent propionyl-CoA carboxylase (PCC), a mitochondrial enzyme involved in the catabolism of odd chain fatty acids, branched-chain amino acids isoleucine, threonine, methionine, and valine and other metabolites. Propionyl-CoA carboxylase catalyzes the carboxylation of propionyl-CoA/propanoyl-CoA to D-methylmalonyl-CoA/(S)-methylmalonyl-CoA. Within the holoenzyme, the alpha subunit catalyzes the ATP-dependent carboxylation of the biotin carried by the biotin carboxyl carrier (BCC) domain, while the beta subunit then transfers the carboxyl group from carboxylated biotin to propionyl-CoA. Propionyl-CoA carboxylase also significantly acts on butyryl-CoA/butanoyl-CoA, which is converted to ethylmalonyl-CoA/(2S)-ethylmalonyl-CoA at a much lower rate. Other alternative minor substrates include (2E)-butenoyl-CoA/crotonoyl-CoA. The chain is Propionyl-CoA carboxylase beta chain, mitochondrial from Sus scrofa (Pig).